The chain runs to 187 residues: PBAN-type neuropeptides (187 aa).

The signal sequence occupies residues 1 to 22 (MSRFYFFFNLICLYLAIKSALS). The propeptide occupies 23–64 (AELDTNDQKYADLRTTGRGESPDSTGPDSDTLRRDDGAEGLN). The segment covering 34 to 43 (DLRTTGRGES) has biased composition (basic and acidic residues). The disordered stretch occupies residues 34-58 (DLRTTGRGESPDSTGPDSDTLRRDD). L76 carries the leucine amide modification. Positions 80 to 127 (TIAADLHDDLVEEFDAEPLGYAGEPPQKLATELVQGAPYMVLLVTAKP) are excised as a propeptide. The tract at residues 132–163 (PIFYHTTSPRLGRRDSVGENHQRPPFAPRLGR) is disordered. A Leucine amide modification is found at L142. Basic and acidic residues predominate over residues 143–153 (GRRDSVGENHQ). Leucine amide occurs at positions 161 and 171. Residues 174 to 187 (SYNGGYPLPFQFAY) constitute a propeptide that is removed on maturation.

This sequence belongs to the pyrokinin family.

It is found in the secreted. Its function is as follows. A hormone that controls sex pheromone production in females and pheromone responsiveness in male. Also mediates visceral muscle contractile activity (myotropic activity). In Anopheles gambiae (African malaria mosquito), this protein is PBAN-type neuropeptides.